A 436-amino-acid polypeptide reads, in one-letter code: S-locus-specific glycoprotein S6 (436 aa).

The first 31 residues, 1–31 (MKGVRKPYDNSYTLSFLLVFFVLILFCPAFS), serve as a signal peptide directing secretion. The Bulb-type lectin domain maps to 34–156 (TLSSTESLRI…SNNDASEYLW (123 aa)). N-linked (GlcNAc...) asparagine glycans are attached at residues Asn46, Asn64, Asn114, Asn121, Asn245, Asn261, and Asn390. The PAN domain occupies 351 to 431 (CSGDGFTRMK…HGQDLYVRLA (81 aa)). 2 cysteine pairs are disulfide-bonded: Cys381–Cys406 and Cys389–Cys391.

As to expression, stigma.

Its function is as follows. Involved in sporophytic self-incompatibility system (the inability of flowering plants to achieve self-fertilization). This chain is S-locus-specific glycoprotein S6 (SLSG), found in Brassica oleracea (Wild cabbage).